The chain runs to 169 residues: Peptide deformylase (169 aa).

Residues cysteine 91 and histidine 133 each contribute to the Fe cation site. Glutamate 134 is a catalytic residue. Histidine 137 provides a ligand contact to Fe cation.

The protein belongs to the polypeptide deformylase family. Requires Fe(2+) as cofactor.

The enzyme catalyses N-terminal N-formyl-L-methionyl-[peptide] + H2O = N-terminal L-methionyl-[peptide] + formate. Its function is as follows. Removes the formyl group from the N-terminal Met of newly synthesized proteins. Requires at least a dipeptide for an efficient rate of reaction. N-terminal L-methionine is a prerequisite for activity but the enzyme has broad specificity at other positions. This chain is Peptide deformylase, found in Klebsiella pneumoniae subsp. pneumoniae (strain ATCC 700721 / MGH 78578).